The following is a 450-amino-acid chain: Putative nucleolar protein 5-3 (450 aa).

Residues 252-370 (IAPNLTALVG…LEARLRNLEG (119 aa)) form the Nop domain. Residues 375–423 (ACEEEEEVNDKDTKKEADDEEEPKTEECSKKRKKEAELETVEDPAKKSK) form a disordered region. The span at 399-423 (TEECSKKRKKEAELETVEDPAKKSK) shows a compositional bias: basic and acidic residues.

It belongs to the NOP5/NOP56 family.

The protein localises to the nucleus. The protein resides in the nucleolus. Its function is as follows. Required for 60S ribosomal subunit biogenesis. The chain is Putative nucleolar protein 5-3 (NOP5-3) from Arabidopsis thaliana (Mouse-ear cress).